Reading from the N-terminus, the 360-residue chain is tRNA (guanine(9)-N1)-methyltransferase (360 aa).

Residues 1-77 (MENQDTEQSQ…RRKERIKEAE (77 aa)) are disordered. 2 stretches are compositionally biased toward basic and acidic residues: residues 8–24 (QSQK…DFKR) and 33–55 (MTKR…DEYK). The span at 56–67 (QKKREKKKAARE) shows a compositional bias: basic residues. Residues 68-77 (RRKERIKEAE) show a composition bias toward basic and acidic residues. The SAM-dependent MTase TRM10-type domain maps to 94–293 (RAKVAPQEQI…EVLPPRKVKG (200 aa)). S-adenosyl-L-methionine-binding positions include 199-200 (LT), G219, 223-227 (DKNRY), C231, L245, and 257-259 (QVL). D223 functions as the Proton acceptor in the catalytic mechanism. The tract at residues 291-360 (VKGKLTHGSD…SDEPSKGADH (70 aa)) is disordered. Residues 297–306 (HGSDPEKSIE) are compositionally biased toward basic and acidic residues. The segment covering 307–324 (PSEVSEQPVSSEQSEQPV) has biased composition (low complexity). The segment covering 328 to 343 (QPVSSEQPVLSEQPVL) has biased composition (polar residues).

This sequence belongs to the class IV-like SAM-binding methyltransferase superfamily. TRM10 family. In terms of assembly, monomer.

It localises to the cytoplasm. Its subcellular location is the nucleus. It catalyses the reaction guanosine(9) in tRNA + S-adenosyl-L-methionine = N(1)-methylguanosine(9) in tRNA + S-adenosyl-L-homocysteine + H(+). In terms of biological role, S-adenosyl-L-methionine-dependent guanine N(1)-methyltransferase that catalyzes the formation of N(1)-methylguanine at position 9 (m1G9) in cytoplasmic tRNA. This chain is tRNA (guanine(9)-N1)-methyltransferase, found in Debaryomyces hansenii (strain ATCC 36239 / CBS 767 / BCRC 21394 / JCM 1990 / NBRC 0083 / IGC 2968) (Yeast).